The primary structure comprises 177 residues: Thymidine kinase (177 aa).

ATP is bound at residue 11–18; it reads GPMLSGKS. The active-site Proton acceptor is Glu-83. Residue Phe-113 participates in substrate binding. Cys-138 and Cys-141 together coordinate Zn(2+). 157 to 161 provides a ligand contact to substrate; it reads IEIIG. Cys-170 and Cys-173 together coordinate Zn(2+).

Belongs to the thymidine kinase family. Homotetramer. Two molecules of substrate bind to each enzyme tetramer.

It catalyses the reaction thymidine + ATP = dTMP + ADP + H(+). Functionally, phosphorylates thymidine and thymidine analogs, such as azidothymidine (AZT). Part of the salvage pathway for pyrimidine deoxyribonucleotide synthesis. The protein is Thymidine kinase (OPG101) of Monkeypox virus (strain Zaire-96-I-16) (MPX).